The chain runs to 328 residues: Global transcription regulator sge1 (328 aa).

Disordered stretches follow at residues 94-120 (PGEKKRAKGKGGKSTTQSGGISKPRQR) and 251-293 (QMHQ…QYVH). Composition is skewed to low complexity over residues 106-116 (KSTTQSGGISK), 251-261 (QMHQPQVHQPL), and 282-293 (AHQPQVHQQYVH).

It belongs to the MIT1/WOR1 family.

The protein localises to the nucleus. In terms of biological role, global transcriptional regulator of transcription that impacts, but is not absolutely required for secondary metabolism and pathogenicity on maize. Regulates synthesis of multiple secondary metabolites, including fumonisins and fusarins. The chain is Global transcription regulator sge1 from Gibberella moniliformis (strain M3125 / FGSC 7600) (Maize ear and stalk rot fungus).